We begin with the raw amino-acid sequence, 318 residues long: Acyl-CoA dehydrogenase IpdE2 (318 aa).

Residues R210 and G277 each coordinate FAD.

Belongs to the acyl-CoA dehydrogenase family. Heterotetramer composed of 2 IpdE1 subunits and 2 IpdE2 subunits. FAD is required as a cofactor.

The catalysed reaction is 3-[(3aS,4S,5R,7aS)-5-hydroxy-7a-methyl-1-oxo-octahydro-1H-inden-4-yl]propanoyl-CoA + A = (2E)-3-[(3aS,4S,5R,7aS)-5-hydroxy-7a-methyl-1-oxo-octahydro-1H-inden-4-yl]prop-2-enoyl-CoA + AH2. The protein operates within steroid metabolism; cholesterol degradation. Its function is as follows. Involved in cholesterol degradation. Catalyzes the dehydrogenation of 5OH-HIP-CoA to 5OH-HIPE-CoA. Can also use octanoyl-CoA and dihydroferuloyl-CoA, with lower efficiency. Cannot use 3-oxo-4-pregnene-20-carboxyl-CoA (3-OPC-CoA). The protein is Acyl-CoA dehydrogenase IpdE2 of Mycobacterium tuberculosis (strain ATCC 25618 / H37Rv).